The following is a 240-amino-acid chain: Transmembrane protein 65 (240 aa).

Residues 1 to 61 (MSRLLPLLRS…RRLGTHPKKE (61 aa)) constitute a mitochondrion transit peptide. The Cytoplasmic portion of the chain corresponds to 62-110 (PMEALNTAQGARDFIYSLHSTERSCLLKELHRFESIAIAQEKLEAPPPT). A helical membrane pass occupies residues 111–131 (PGQLRYVFIHNAIPFIGFGFL). The Extracellular segment spans residues 132–142 (DNAIMIVAGTH). The chain crosses the membrane as a helical span at residues 143 to 165 (IEMSIGIILGISTMAAAALGNLV). Over 166–209 (SDLAGLGLAGYVEALASRLGLSIPDLTPKQVDMWQTRLSTHLGK) the chain is Cytoplasmic. Residues 210 to 230 (AVGVTIGCILGMFPLIFFGGG) form a helical membrane-spanning segment. The Extracellular portion of the chain corresponds to 231–240 (EEDEKLETKS).

Monomer. Homodimer. Interacts with GJA1. Interacts weakly with DSP. Interacts with SCN1B. As to expression, predominantly expressed the ventricular tissue (at protein level).

The protein localises to the cell membrane. It is found in the mitochondrion inner membrane. Functionally, essential for maintaining proper cardiac intercalated disk (ICD) structure and function as well as cardiac conduction velocity in the heart. Its association with SCN1B is required for stabilizing the perinexus in the ICD and for localization of GJA1 and SCN5A to the ICD. May regulate the function of the gap junction protein GJA1 and may contribute to the stability and proper localization of GJA1 to cardiac intercalated disk thereby regulating gap junction communication. May also play a role in the regulation of mitochondrial respiration and mitochondrial DNA copy number maintenance. This Homo sapiens (Human) protein is Transmembrane protein 65 (TMEM65).